We begin with the raw amino-acid sequence, 127 residues long: Small ribosomal subunit protein uS12 (127 aa).

Residues 8–28 (IRTEREKARQKTKSPALKQCP) form a disordered region. Asp-89 bears the 3-methylthioaspartic acid mark. Positions 102 to 127 (LDTAGVKDRKQGRSKYGTKRPKEAKK) are disordered. Residues 113–127 (GRSKYGTKRPKEAKK) show a composition bias toward basic residues.

Belongs to the universal ribosomal protein uS12 family. As to quaternary structure, part of the 30S ribosomal subunit. Contacts proteins S8 and S17. May interact with IF1 in the 30S initiation complex.

With S4 and S5 plays an important role in translational accuracy. In terms of biological role, interacts with and stabilizes bases of the 16S rRNA that are involved in tRNA selection in the A site and with the mRNA backbone. Located at the interface of the 30S and 50S subunits, it traverses the body of the 30S subunit contacting proteins on the other side and probably holding the rRNA structure together. The combined cluster of proteins S8, S12 and S17 appears to hold together the shoulder and platform of the 30S subunit. In Nostoc sp. (strain PCC 7120 / SAG 25.82 / UTEX 2576), this protein is Small ribosomal subunit protein uS12.